Here is a 137-residue protein sequence, read N- to C-terminus: Small ribosomal subunit protein uS12 (137 aa).

Asp-89 is subject to 3-methylthioaspartic acid. Residues Ser-101–Lys-137 are disordered. Positions Lys-116–Lys-137 are enriched in low complexity.

The protein belongs to the universal ribosomal protein uS12 family. Part of the 30S ribosomal subunit. Contacts proteins S8 and S17. May interact with IF1 in the 30S initiation complex.

Functionally, with S4 and S5 plays an important role in translational accuracy. Interacts with and stabilizes bases of the 16S rRNA that are involved in tRNA selection in the A site and with the mRNA backbone. Located at the interface of the 30S and 50S subunits, it traverses the body of the 30S subunit contacting proteins on the other side and probably holding the rRNA structure together. The combined cluster of proteins S8, S12 and S17 appears to hold together the shoulder and platform of the 30S subunit. The sequence is that of Small ribosomal subunit protein uS12 from Chlorobium chlorochromatii (strain CaD3).